A 238-amino-acid chain; its full sequence is 1-(5-phosphoribosyl)-5-[(5-phosphoribosylamino)methylideneamino] imidazole-4-carboxamide isomerase (238 aa).

Catalysis depends on Asp8, which acts as the Proton acceptor. The active-site Proton donor is Asp130.

It belongs to the HisA/HisF family.

Its subcellular location is the cytoplasm. The enzyme catalyses 1-(5-phospho-beta-D-ribosyl)-5-[(5-phospho-beta-D-ribosylamino)methylideneamino]imidazole-4-carboxamide = 5-[(5-phospho-1-deoxy-D-ribulos-1-ylimino)methylamino]-1-(5-phospho-beta-D-ribosyl)imidazole-4-carboxamide. Its pathway is amino-acid biosynthesis; L-histidine biosynthesis; L-histidine from 5-phospho-alpha-D-ribose 1-diphosphate: step 4/9. The protein is 1-(5-phosphoribosyl)-5-[(5-phosphoribosylamino)methylideneamino] imidazole-4-carboxamide isomerase of Methanococcus maripaludis (strain C7 / ATCC BAA-1331).